A 1018-amino-acid chain; its full sequence is 2-oxoglutarate dehydrogenase-like, mitochondrial (1018 aa).

Ca(2+) is bound by residues H138, D151, and D153. Positions 307, 406, 439, 441, and 671 each coordinate thiamine diphosphate. Mg(2+)-binding residues include D406, N439, and I441.

This sequence belongs to the alpha-ketoglutarate dehydrogenase family. The OGDHC complex comprises multiple copies of three catalytic enzyme components, the 2-oxoglutarate dehydrogenase (OGDH/E1), the dihydrolipoamide dehydrogenase (DLST/E2) and the dihydrolipoamide dehydrogenase (DLD/E3). OGDHL/E1-like isoenzyme may replace OGDH in the OGDHC complex in the brain. It depends on thiamine diphosphate as a cofactor. Requires Mg(2+) as cofactor.

The protein localises to the mitochondrion matrix. The enzyme catalyses N(6)-[(R)-lipoyl]-L-lysyl-[protein] + 2-oxoglutarate + H(+) = N(6)-[(R)-S(8)-succinyldihydrolipoyl]-L-lysyl-[protein] + CO2. Functionally, 2-oxoglutarate dehydrogenase (E1-like) component of the 2-oxoglutarate dehydrogenase multienzyme complex (OGDHC) which mediates the decarboxylation of alpha-ketoglutarate in the tricarboxylic acid cycle. The OGDHC complex catalyzes the overall conversion of 2-oxoglutarate to succinyl-CoA and CO(2) while reducing NAD(+) to NADH. The OGDHC complex is mainly active in the mitochondrion. Involved in the inhibition of cell proliferation and in apoptosis. The sequence is that of 2-oxoglutarate dehydrogenase-like, mitochondrial (ogdhl) from Xenopus laevis (African clawed frog).